Reading from the N-terminus, the 118-residue chain is Large ribosomal subunit protein bL20 (118 aa).

Belongs to the bacterial ribosomal protein bL20 family.

Binds directly to 23S ribosomal RNA and is necessary for the in vitro assembly process of the 50S ribosomal subunit. It is not involved in the protein synthesizing functions of that subunit. This chain is Large ribosomal subunit protein bL20, found in Caldicellulosiruptor saccharolyticus (strain ATCC 43494 / DSM 8903 / Tp8T 6331).